We begin with the raw amino-acid sequence, 142 residues long: Transcriptional regulator MraZ (142 aa).

SpoVT-AbrB domains follow at residues 5 to 47 and 76 to 119; these read NYQH…TNQE and SLTV…DINA.

This sequence belongs to the MraZ family. As to quaternary structure, forms oligomers.

Its subcellular location is the cytoplasm. The protein resides in the nucleoid. The sequence is that of Transcriptional regulator MraZ from Mycoplasmoides gallisepticum (strain R(low / passage 15 / clone 2)) (Mycoplasma gallisepticum).